Consider the following 539-residue polypeptide: Sphingosine-1-phosphate lyase (539 aa).

The signal sequence occupies residues 1 to 46; the sequence is MELAMDFALRLRDAANHHLSRYEPLVLLAAPLLALLAARTLHAAAA. Topologically, residues 47–54 are lumenal; the sequence is AVADRGLR. A helical transmembrane segment spans residues 55 to 75; sequence TVLLALAMTAIKLLPGVSAYI. Topologically, residues 76 to 539 are cytoplasmic; it reads NAEKRKVVDQ…LLVEFMDASC (464 aa). Position 344 is an N6-(pyridoxal phosphate)lysine (K344).

This sequence belongs to the group II decarboxylase family. Sphingosine-1-phosphate lyase subfamily. The cofactor is pyridoxal 5'-phosphate.

It localises to the endoplasmic reticulum membrane. The catalysed reaction is sphinganine 1-phosphate = hexadecanal + phosphoethanolamine. Its pathway is lipid metabolism; sphingolipid metabolism. Functionally, cleaves phosphorylated sphingoid bases (PSBs), such as sphingosine-1-phosphate, into fatty aldehydes and phosphoethanolamine. Elevates stress-induced ceramide production and apoptosis. In Oryza sativa subsp. japonica (Rice), this protein is Sphingosine-1-phosphate lyase (SPL).